Reading from the N-terminus, the 186-residue chain is ADP-ribosylation factor-like protein 8B (186 aa).

The note=Mediates targeting to membranes intramembrane region spans 1 to 19 (MLALISRLLDWFRSLFWKE). GTP is bound by residues 29–35 (QYSGKTT), 71–75 (DIGGQ), and 130–133 (NKRD). Residue Lys141 forms a Glycyl lysine isopeptide (Lys-Gly) (interchain with G-Cter in ubiquitin) linkage.

This sequence belongs to the small GTPase superfamily. Arf family. In terms of assembly, interacts with tubulin. Interacts with BORCS5; recruits ARL8B to lysosomes. Interacts with VPS41; the interaction mediates the recruitment of the HOPS complex to lysosomes. Interacts (GTP-bound form) with PLEKHM2 (via RUN domain); the interaction is required to recruit the motor protein kinesin-1 on lysosomes. Interacts (GTP-bound form) with PLEKHM1 (via RUN domain); the interaction is required for PLEKHM1 localization to lysosomes and for ARL8B function in delivery and degradation of endocytic and autophagic cargo in lysosomes. PLEKHM1 and PLEKHM2 compete for interaction with ARL8B. Interacts (GTP-bound form) with RUFY1; the interaction is required for RUFY1 endosomal location. When GTP-bound, interacts with RUFY3 and RUFY4, but not with RUFY1, nor RUFY2. In terms of processing, ubiquitinated at Lys-141 by RNF167, leading to its degradation.

The protein localises to the late endosome membrane. The protein resides in the lysosome membrane. It localises to the cytoplasm. It is found in the cytoskeleton. Its subcellular location is the spindle. The protein localises to the cell projection. The protein resides in the axon. It localises to the synapse. It is found in the cytolytic granule membrane. Its subcellular location is the early endosome membrane. The catalysed reaction is GTP + H2O = GDP + phosphate + H(+). Small GTPase which cycles between active GTP-bound and inactive GDP-bound states. In its active state, binds to a variety of effector proteins playing a key role in the regulation of lysosomal positioning which is important for nutrient sensing, natural killer cell-mediated cytotoxicity and antigen presentation. Along with its effectors, orchestrates lysosomal transport and fusion. Localizes specifically to lysosomal membranes and mediates anterograde lysosomal motility by recruiting PLEKHM2, which in turn recruits the motor protein kinesin-1 on lysosomes. Required for lysosomal and cytolytic granule exocytosis. Critical factor involved in NK cell-mediated cytotoxicity. Drives the polarization of cytolytic granules and microtubule-organizing centers (MTOCs) toward the immune synapse between effector NK lymphocytes and target cells. In neurons, mediates the anterograde axonal long-range transport of presynaptic lysosome-related vesicles required for presynaptic biogenesis and synaptic function. Also acts as a regulator of endosome to lysosome trafficking pathways of special significance for host defense. Recruits RUFY1 onto early endosomes regulating endosomes to trans-Golgi network proteins retrieval. Regulates cargo trafficking to lysosomes by binding to PLEKHM1 and recruiting the HOPS subunit VPS41, resulting in functional assembly of the HOPS complex on lysosomal membranes. Plays an important role in cargo delivery to lysosomes for antigen presentation and microbial killing. Directs the intersection of CD1d with lipid antigens in lysosomes, and plays a role in intersecting phagosomes with lysosomes to generate phagolysosomes that kill microbes. Involved in the process of MHC II presentation. Regulates the delivery of antigens to lysosomes and the formation of MHC II-peptide complexes through the recruitment of the HOPS complex to lysosomes allowing the fusion of late endosomes to lysosomes. May play a role in chromosome segregation. This chain is ADP-ribosylation factor-like protein 8B (ARL8B), found in Bos taurus (Bovine).